Reading from the N-terminus, the 350-residue chain is Renin receptor (350 aa).

Residues 1–17 (MAVLVVLLFFLVAGALG) form the signal peptide. Topologically, residues 18-302 (NEFSILRSPG…YNLAYKYNLE (285 aa)) are extracellular. Residues 303 to 323 (YSVVFNLVLWIMIGLALAVII) traverse the membrane as a helical segment. Over 324–350 (TSYNIWNMDPGYDSIIYRMTNQKIRID) the chain is Cytoplasmic. The short motif at 346 to 350 (KIRID) is the Mediates retrograde transport to the ER element.

Interacts with renin. Accessory component of the multisubunit proton-transporting vacuolar (V)-ATPase protein pump. Interacts (via N-terminus) with ATP6AP1 (via N-terminus). Interacts with ATP6V0D1; ATP6V0D1 is a V-ATPase complex subunit and the interaction promotes V-ATPase complex assembly. Interacts with TMEM9; TMEM9 is a V-ATPase assembly regulator and the interaction induces the interaction with ATP6V0D1. Interacts with VMA21 (via N-terminus); VMA21 is a V-ATPase accessory component. In terms of processing, phosphorylated. Proteolytically cleaved by a furin-like convertase in the trans-Golgi network to generate N- and C-terminal fragments. Expressed in glutamatergic and GABAergic neurons with highest levels in the cortex, the hippocampus, the medial habenular nucleus, the cerebellum, the medulla and the olfactory bulb (at protein level).

It localises to the endoplasmic reticulum membrane. The protein resides in the lysosome membrane. Its subcellular location is the cytoplasmic vesicle. It is found in the autophagosome membrane. The protein localises to the cell projection. It localises to the dendritic spine membrane. The protein resides in the axon. Its subcellular location is the endosome membrane. It is found in the clathrin-coated vesicle membrane. The protein localises to the secretory vesicle. It localises to the synaptic vesicle membrane. In terms of biological role, multifunctional protein which functions as a renin, prorenin cellular receptor and is involved in the assembly of the lysosomal proton-transporting V-type ATPase (V-ATPase) and the acidification of the endo-lysosomal system. May mediate renin-dependent cellular responses by activating ERK1 and ERK2. By increasing the catalytic efficiency of renin in AGT/angiotensinogen conversion to angiotensin I, may also play a role in the renin-angiotensin system (RAS). Through its function in V-type ATPase (v-ATPase) assembly and acidification of the lysosome it regulates protein degradation and may control different signaling pathways important for proper brain development, synapse morphology and synaptic transmission. The polypeptide is Renin receptor (Mus musculus (Mouse)).